The primary structure comprises 212 residues: Glutathione S-transferase hmp2 (212 aa).

In terms of domain architecture, GST N-terminal spans 1-80; sequence MVIKLYGSAM…YLARKYDSGT (80 aa). Glutathione contacts are provided by residues 51–52 and 64–65; these read KV and ES. Residues 88 to 212 enclose the GST C-terminal domain; that stretch reads DHEAYGRFEQ…TWIKATAEAR (125 aa).

The protein belongs to the GST superfamily.

It catalyses the reaction RX + glutathione = an S-substituted glutathione + a halide anion + H(+). It functions in the pathway secondary metabolite biosynthesis. Functionally, glutathione S-transferase; part of the gene cluster that mediates the biosynthesis of hypothemycin, a resorcylic acid lactone (RAL) that irreversibly inhibits a subset of protein kinases with a conserved cysteine in the ATP binding site such as human ERK2. The first step is performed by both PKSs hmp3 and hmp8 and leads to the production of 7',8'-dehydrozearalenol (DHZ). The highly reducing PKS hpm8 synthesizes the reduced hexaketide (7S,11S,2E,8E)-7,11-dihydroxy-dodeca-2,8-dienoate, which is transferred downstream to the non-reducing PKS hpm3. Hpm3 then extends the reduced hexaketide to a nonaketide, after which regioselective cyclization and macrolactonization affords DHZ. The next step is the conversion of DHZ into aigialomycin C and is performed by the O-methyltransferase hmp5, the FAD-binding monooxygenase hmp7, and the cytochrome P450 monooxygenase hmp1. The wide substrate tolerance of the hmp5 and hmp7 implies that the reactions from DHZ to aigialomycin C can occur in any order. The steps from aigialomycin C to hypothemycin are less well established. The FAD-linked oxidoreductase hmp9 presumably catalyzes oxidation of the C-6' hydroxyl to a ketone. The timing of this oxidation is important, since the resulting enone functional group is a Michael acceptor that can react spontaneously with glutathione, an abundant metabolite in fungal cells. The glutathione S-transferase hmp2 catalyzes cis-trans isomerization of the 7',8' double bond with equilibrium favoring the trans isomer. The hpm6-encoded transporter might preferentially pump hypothemycin out of the cell relative to the trans isomer aigialomycin A. The cis-to-trans isomerization may be coupled with C-4' hydroxylation, since all known hypothemycin analogs containing the enone functional group also have hydroxyl groups at both C-4' and C-5'. This is Glutathione S-transferase hmp2 from Hypomyces subiculosus (Nectria subiculosa).